The chain runs to 483 residues: Prenyltransferase vrtC (483 aa).

It belongs to the tryptophan dimethylallyltransferase family.

It functions in the pathway secondary metabolite biosynthesis; terpenoid biosynthesis. In terms of biological role, prenyltransferase; part of the gene cluster that mediates the biosynthesis of viridicatumtoxin, a tetracycline-like fungal meroterpenoid with a unique, fused spirobicyclic ring system. The first step of the pathway is the production of the malonamoyl-CoA starter unit for the polyketide synthase vrtA. The aldolase vrtJ may be involved in the synthesis of the malonamate substrate for malonamoyl-CoA synthetase vrtB. The polyketide synthase vrtA then may utilize the malonamoyl-CoA starter unit, followed by sequential condensation of eight malonyl-CoA units to form the polyketide backbone. The cyclization of the last ring could be mediated by the lactamase-like protein vrtG. The proposed post-PKS tailoring steps are a hydroxylation at C5 catalyzed the cytochrome P450 monooxygenase vrtE, a hydroxylation at C12a catalyzed by VrtH and/or VrtI, and an O-methylation by the O-methyltransferase vrtF. VrtC is then proposed to catalyze the transfer of a geranyl group synthesized by vrtD to the aromatic C ring of the tetracyclic polyketide intermediate of viridicatumtoxin to yield previridicatumtoxin. Finally, the cytochrome P450 monooxygenase vrtK catalyzes the spirocyclization of the geranyl moiety of previridicatumtoxin to afford viridicatumtoxin. In Penicillium aethiopicum, this protein is Prenyltransferase vrtC.